The chain runs to 607 residues: MKPVSCVGLLVLLVGVLVTVKGSILFQSPKVLIVSLIRNKEHTLPYFFSYLEDQEYPKDRISLWFRSDHNEDRSIDIIKAWLKRVTKKYHSVDFGYRSDAAKRYDEKSSTHWSEDRFADVIRLKQEALDKGRKMWADFVLFLDADVLLTNPNTIAKLVSLNLPIVAPMLLSDGLYSNFWCGMTADYYYHRTDEYKEILNYEKTGEFPVPMVHSAVMVNINVQQSLNLSFDKRRLPPGHYTGPVDDIIIFAMSANYSSIPMYISNSASYGYILVPLEQGDPLEKDLEQLTNTKVYIINEHGAINLKEDLKHFVPKVPKDKMGVSHIYMINLERRPERRNKMFNNFDELGLDVEFFPAVDGRQLSDDKLRDIGVKFLPGYADPYHKRPMTMGEIGCFLSHYYIWEKMVAMNQEEVLVLEDDIRFEPYFKRRVAQVLDDARRIGGWDLIYFGRKRLQEDDEKWVVGSETLVVAGYSYWTLGYLISLQGAKKLLEEKPLEKLVPVDEYIPIMFNNHPNESWVNHFKNRNLVAWSAAPLLLYPTHYTGDDGYISDTEDSARIDNFNKVLNDTSDSSAEKKGDKEQLSSKTLMDSTISRDEHELSVANRKSEL.

The signal sequence occupies residues 1–22 (MKPVSCVGLLVLLVGVLVTVKG). Asn-226, Asn-254, Asn-514, and Asn-565 each carry an N-linked (GlcNAc...) asparagine glycan. The disordered stretch occupies residues 566–607 (DTSDSSAEKKGDKEQLSSKTLMDSTISRDEHELSVANRKSEL). Composition is skewed to basic and acidic residues over residues 571–581 (SAEKKGDKEQL) and 591–607 (ISRD…KSEL). Residues 604–607 (KSEL) carry the Prevents secretion from ER motif.

It belongs to the glycosyltransferase 25 family.

It is found in the endoplasmic reticulum lumen. The chain is Glycosyltransferase 25 family member from Aedes aegypti (Yellowfever mosquito).